A 351-amino-acid polypeptide reads, in one-letter code: Putative aminodehydroquinate synthase (351 aa).

Residues 65-68 (EPTK), 97-101 (GTTTD), 121-122 (TS), K134, K143, and 161-164 (YLTT) contribute to the NAD(+) site. The Zn(2+) site is built by E176, H225, and H241.

It belongs to the sugar phosphate cyclases superfamily. aDHQS family. The cofactor is NAD(+). It depends on Co(2+) as a cofactor. Zn(2+) serves as cofactor.

Its function is as follows. May catalyze the conversion of 3,4-dideoxy-4-amino-D-arabino-heptulosonate 7-phosphate (aDAHP) to 5-deoxy-5-amino-3-dehydroquinate (aDHQ). Probably involved in the formation of 3-amino-5-hydroxybenzoic acid (AHBA), the precursor of rifamycin and related ansamycins. The polypeptide is Putative aminodehydroquinate synthase (Amycolatopsis mediterranei (strain S699) (Nocardia mediterranei)).